The sequence spans 332 residues: Beta-ketoacyl-[acyl-carrier-protein] synthase III (332 aa).

Active-site residues include C116 and H255. The interval 256–260 (QANLR) is ACP-binding. N285 is an active-site residue.

This sequence belongs to the thiolase-like superfamily. FabH family. As to quaternary structure, homodimer.

Its subcellular location is the cytoplasm. The catalysed reaction is malonyl-[ACP] + acetyl-CoA + H(+) = 3-oxobutanoyl-[ACP] + CO2 + CoA. Its pathway is lipid metabolism; fatty acid biosynthesis. Its function is as follows. Catalyzes the condensation reaction of fatty acid synthesis by the addition to an acyl acceptor of two carbons from malonyl-ACP. Catalyzes the first condensation reaction which initiates fatty acid synthesis and may therefore play a role in governing the total rate of fatty acid production. Possesses both acetoacetyl-ACP synthase and acetyl transacylase activities. Its substrate specificity determines the biosynthesis of branched-chain and/or straight-chain of fatty acids. This chain is Beta-ketoacyl-[acyl-carrier-protein] synthase III, found in Helicobacter hepaticus (strain ATCC 51449 / 3B1).